A 135-amino-acid polypeptide reads, in one-letter code: Large ribosomal subunit protein bL19 (135 aa).

This sequence belongs to the bacterial ribosomal protein bL19 family.

Functionally, this protein is located at the 30S-50S ribosomal subunit interface and may play a role in the structure and function of the aminoacyl-tRNA binding site. The sequence is that of Large ribosomal subunit protein bL19 from Xanthomonas euvesicatoria pv. vesicatoria (strain 85-10) (Xanthomonas campestris pv. vesicatoria).